A 566-amino-acid chain; its full sequence is Protein OBERON 1 (566 aa).

The segment covering 1-10 (MGTSSGSNLP) has biased composition (polar residues). The disordered stretch occupies residues 1-79 (MGTSSGSNLP…KTGPDSHDQH (79 aa)). A compositionally biased stretch (low complexity) spans 18 to 29 (QQLQTSLSLVSS). The segment covering 47–60 (ESASSQETWPTSKS) has biased composition (polar residues). Residues 64–79 (RKTDSGKTGPDSHDQH) are compositionally biased toward basic and acidic residues. The PHD-type zinc-finger motif lies at 225-289 (LCMCVICNKF…LFKCRACNHT (65 aa)). A coiled-coil region spans residues 407-522 (EEKTRMYKKA…LFEKIKEQES (116 aa)). The tract at residues 545-566 (YNASSPRVDPRSNQRNPFRSNP) is disordered. Residues 555–566 (RSNQRNPFRSNP) are compositionally biased toward polar residues.

As to quaternary structure, self-interacts. Interacts with OBE2, OBE3 and OBE4. Binds to VPg of pea seed borne mosaic virus (PSbMV), turnip mosaic virus (TuMV) and lettuce mosaic virus (LMV), but not with VPg of tobacco etch virus (TEV), cowpea mosaic virus (CPMV), tomato black ring virus (TBRV) and grapevine fan leaf virus (GFLV). Interacts with RBL. As to expression, expressed in roots, seedlings, stems, leaves, flowers and siliques, especially in the vasculature.

It localises to the nucleus. It is found in the nucleoplasm. In terms of biological role, probable transcription factor that acts together with OBE2 for the maintenance and/or establishment of both the shoot and root meristems, probably by controlling the expression of the meristem genes such as WUS, PLT1 and PLT2 and of genes required for auxin responses. Promotes cell meristematic activity via the WUSCHEL-CLAVATA pathway. Involved in the development of the basal pole and in auxin-mediated root and vascular development in the embryo. Confers sensitivity to turnip mosaic virus (TuMV) probably by promoting viral movement and multiplication via interaction with TuMV VPg. The polypeptide is Protein OBERON 1 (Arabidopsis thaliana (Mouse-ear cress)).